The following is a 132-amino-acid chain: CLAVATA3/ESR (CLE)-related protein 2-B (132 aa).

Residues 1 to 26 (MASRMGMVAILSLFVCALVASTSVNA) form the signal peptide. Residues 68–132 (NRASKQLDRE…IGPPPFLDRY (65 aa)) are disordered. Proline 82 and proline 85 each carry hydroxyproline. Proline 85 carries O-linked (Ara...) hydroxyproline glycosylation.

It belongs to the CLV3/ESR signal peptide family. Post-translationally, the O-glycosylation (arabinosylation) of the hydroxyproline Pro-85 enhances binding affinity of the ESR2Bp peptide for its receptor. As to expression, seed endosperm.

It localises to the secreted. Its subcellular location is the extracellular space. Extracellular signal peptide that regulates cell fate. The chain is CLAVATA3/ESR (CLE)-related protein 2-B from Zea mays (Maize).